Consider the following 601-residue polypeptide: Potassium-transporting ATPase potassium-binding subunit (601 aa).

A run of 12 helical transmembrane segments spans residues 6–26, 65–85, 136–156, 179–199, 283–303, 313–333, 367–387, 397–417, 419–439, 458–478, 524–544, and 566–586; these read IMLL…LGLF, SYAI…YAVQ, ALTG…FALI, LYIL…QGVI, FSNF…CFTF, GWAV…IVMT, FGIS…CGAV, MGGF…GGVG, GLYG…LMIG, SIAI…AVLV, MLAI…LAIA, and LFVA…YVPA.

It belongs to the KdpA family. The system is composed of three essential subunits: KdpA, KdpB and KdpC.

It is found in the cell inner membrane. In terms of biological role, part of the high-affinity ATP-driven potassium transport (or Kdp) system, which catalyzes the hydrolysis of ATP coupled with the electrogenic transport of potassium into the cytoplasm. This subunit binds the periplasmic potassium ions and delivers the ions to the membrane domain of KdpB through an intramembrane tunnel. This Herminiimonas arsenicoxydans protein is Potassium-transporting ATPase potassium-binding subunit.